Consider the following 324-residue polypeptide: bZIP transcription factor 46 (324 aa).

Residues 106 to 127 (LGGSDDEDPAAAAAAAAPAQRQ) are disordered. Residues 115-124 (AAAAAAAAPA) are compositionally biased toward low complexity. The bZIP domain maps to 242-287 (VERRQRRMIKNRESAARSRARKQAYIMELEAEVAKLKEQKAELQKK). Residues 244-263 (RRQRRMIKNRESAARSRARK) form a basic motif region. Residues 270 to 284 (LEAEVAKLKEQKAEL) are leucine-zipper.

Interacts with MODD. Interacts with SAPK2, SAPK6 and SAPK9. Phosphorylated on serine and threonine residues by SAPK2, SAPK6 and SAPK9. Phosphorylation is required for full transactivation activity. Expressed in roots, shoots, leaves, flag leaves, stems, flowers and panicles. Widely expressed.

Its subcellular location is the nucleus. Transcription factor involved in abscisic acid (ABA) signaling pathway. Transcription factor activity is fully activated by ABA. Acts as a positive regulator of the expression of abiotic stress-responsive genes through an ABA-dependent signaling pathway. Acts as a positive regulator of ABA signaling and drought stress tolerance. Plays an important role in ABA and auxin responses. Involved in ABA signaling and stress responses by directly binding to the ABA-responsive element (ABRE)-containing genes, especially WRKY family genes. Modulates response to auxin. Suppresses auxin signaling by targeting ABRE-containing genes related to auxin metabolism or signaling. The chain is bZIP transcription factor 46 from Oryza sativa subsp. japonica (Rice).